The primary structure comprises 200 residues: Ankyrin repeat-containing protein YAR1 (200 aa).

ANK repeat units follow at residues 49–78 (SDST…RANS) and 92–121 (TGNT…ADPF). Position 78 is a phosphoserine (S78). Positions 152–173 (VEPEDDEEDTQTEGKNSVQITK) are disordered. Residues 153–162 (EPEDDEEDTQ) show a composition bias toward acidic residues. Polar residues predominate over residues 164–173 (EGKNSVQITK).

In terms of biological role, required for normal rate of cell proliferation. This Saccharomyces cerevisiae (strain ATCC 204508 / S288c) (Baker's yeast) protein is Ankyrin repeat-containing protein YAR1 (YAR1).